Consider the following 265-residue polypeptide: Dimethylsulfide dehydrogenase subunit gamma (265 aa).

The signal sequence occupies residues 1–25; it reads MPGFRFLLAATAAFLATSPALPLSA. Heme b is bound by residues H81 and M147.

Heterotrimer of alpha, beta and gamma subunits. It depends on heme b as a cofactor.

The protein localises to the periplasm. Its function is as follows. May transfer electrons to the iron-sulfur centers of DdhB. This chain is Dimethylsulfide dehydrogenase subunit gamma (ddhC), found in Rhodovulum sulfidophilum (Rhodobacter sulfidophilus).